We begin with the raw amino-acid sequence, 887 residues long: Alanine--tRNA ligase (887 aa).

Positions 564, 568, 676, and 680 each coordinate Zn(2+).

The protein belongs to the class-II aminoacyl-tRNA synthetase family. It depends on Zn(2+) as a cofactor.

Its subcellular location is the cytoplasm. It catalyses the reaction tRNA(Ala) + L-alanine + ATP = L-alanyl-tRNA(Ala) + AMP + diphosphate. Its function is as follows. Catalyzes the attachment of alanine to tRNA(Ala) in a two-step reaction: alanine is first activated by ATP to form Ala-AMP and then transferred to the acceptor end of tRNA(Ala). Also edits incorrectly charged Ser-tRNA(Ala) and Gly-tRNA(Ala) via its editing domain. This is Alanine--tRNA ligase from Sinorhizobium medicae (strain WSM419) (Ensifer medicae).